Consider the following 81-residue polypeptide: Toxin MIT1 (81 aa).

5 disulfide bridges follow: Cys7/Cys19, Cys13/Cys31, Cys18/Cys59, Cys41/Cys67, and Cys61/Cys77.

The protein belongs to the AVIT (prokineticin) family. Expressed by the venom gland.

It is found in the secreted. Potent agonist for both PKR1/PROKR1 and PKR2/PROKR2. Potently contracts gastrointestinal (GI) smooth muscle. The chain is Toxin MIT1 from Dendroaspis polylepis polylepis (Black mamba).